Reading from the N-terminus, the 307-residue chain is Coproporphyrin III ferrochelatase (307 aa).

Residues Tyr12, Arg29, Arg45 to Tyr46, Ser53, and Tyr124 contribute to the Fe-coproporphyrin III site. The Fe(2+) site is built by His181 and Glu263.

Belongs to the ferrochelatase family.

It localises to the cytoplasm. The catalysed reaction is Fe-coproporphyrin III + 2 H(+) = coproporphyrin III + Fe(2+). Its pathway is porphyrin-containing compound metabolism; protoheme biosynthesis. Involved in coproporphyrin-dependent heme b biosynthesis. Catalyzes the insertion of ferrous iron into coproporphyrin III to form Fe-coproporphyrin III. This is Coproporphyrin III ferrochelatase from Staphylococcus aureus (strain MRSA252).